Here is a 249-residue protein sequence, read N- to C-terminus: Probable transcriptional regulatory protein OTBS_0251 (249 aa).

It belongs to the TACO1 family.

It is found in the cytoplasm. This Orientia tsutsugamushi (strain Boryong) (Rickettsia tsutsugamushi) protein is Probable transcriptional regulatory protein OTBS_0251.